A 350-amino-acid chain; its full sequence is Geranylgeranyl diphosphate synthase (350 aa).

Isopentenyl diphosphate is bound by residues Lys-70, Arg-73, and His-102. Mg(2+) is bound by residues Asp-109 and Asp-113. The DDXXD motif signature appears at 109-113 (DDVMD). An isopentenyl diphosphate-binding site is contributed by Arg-119. The DDXXD motif motif lies at 240-244 (DDLIG).

The protein belongs to the FPP/GGPP synthase family. Requires Mg(2+) as cofactor.

The enzyme catalyses isopentenyl diphosphate + (2E,6E)-farnesyl diphosphate = (2E,6E,10E)-geranylgeranyl diphosphate + diphosphate. It functions in the pathway isoprenoid biosynthesis; geranylgeranyl diphosphate biosynthesis; geranylgeranyl diphosphate from farnesyl diphosphate and isopentenyl diphosphate: step 1/1. In terms of biological role, catalyzes the condensation of isopentenyl pyrophosphate (IPP) with (2E,6E)-farnesyl diphosphate (E,E-FPP) to yield geranylgeranyl diphosphate (GGPP). The chain is Geranylgeranyl diphosphate synthase from Mycobacterium tuberculosis (strain ATCC 25618 / H37Rv).